Consider the following 207-residue polypeptide: dTTP/UTP pyrophosphatase (207 aa).

Aspartate 79 acts as the Proton acceptor in catalysis.

It belongs to the Maf family. YhdE subfamily. A divalent metal cation serves as cofactor.

The protein resides in the cytoplasm. The enzyme catalyses dTTP + H2O = dTMP + diphosphate + H(+). It catalyses the reaction UTP + H2O = UMP + diphosphate + H(+). Functionally, nucleoside triphosphate pyrophosphatase that hydrolyzes dTTP and UTP. May have a dual role in cell division arrest and in preventing the incorporation of modified nucleotides into cellular nucleic acids. This Nitrobacter hamburgensis (strain DSM 10229 / NCIMB 13809 / X14) protein is dTTP/UTP pyrophosphatase.